Reading from the N-terminus, the 233-residue chain is Large ribosomal subunit protein uL1 (233 aa).

This sequence belongs to the universal ribosomal protein uL1 family. In terms of assembly, part of the 50S ribosomal subunit.

In terms of biological role, binds directly to 23S rRNA. The L1 stalk is quite mobile in the ribosome, and is involved in E site tRNA release. Protein L1 is also a translational repressor protein, it controls the translation of the L11 operon by binding to its mRNA. This Vibrio parahaemolyticus serotype O3:K6 (strain RIMD 2210633) protein is Large ribosomal subunit protein uL1.